Here is a 121-residue protein sequence, read N- to C-terminus: Large ribosomal subunit protein uL22 (121 aa).

Belongs to the universal ribosomal protein uL22 family. Part of the 50S ribosomal subunit.

In terms of biological role, this protein binds specifically to 23S rRNA; its binding is stimulated by other ribosomal proteins, e.g. L4, L17, and L20. It is important during the early stages of 50S assembly. It makes multiple contacts with different domains of the 23S rRNA in the assembled 50S subunit and ribosome. Its function is as follows. The globular domain of the protein is located near the polypeptide exit tunnel on the outside of the subunit, while an extended beta-hairpin is found that lines the wall of the exit tunnel in the center of the 70S ribosome. This chain is Large ribosomal subunit protein uL22, found in Synechococcus sp. (strain CC9605).